Consider the following 299-residue polypeptide: N-acetylmuramic acid 6-phosphate etherase (299 aa).

The 164-residue stretch at 54 to 217 (TIAQYKKGGR…STITMVGVGK (164 aa)) folds into the SIS domain. E82 serves as the catalytic Proton donor. The active site involves E113.

It belongs to the GCKR-like family. MurNAc-6-P etherase subfamily. Homodimer.

It carries out the reaction N-acetyl-D-muramate 6-phosphate + H2O = N-acetyl-D-glucosamine 6-phosphate + (R)-lactate. Its pathway is amino-sugar metabolism; N-acetylmuramate degradation. Functionally, specifically catalyzes the cleavage of the D-lactyl ether substituent of MurNAc 6-phosphate, producing GlcNAc 6-phosphate and D-lactate. The polypeptide is N-acetylmuramic acid 6-phosphate etherase (Staphylococcus aureus (strain USA300)).